The sequence spans 279 residues: Methyltransferase trt5 (279 aa).

S-adenosyl-L-methionine contacts are provided by residues 124 to 125 and 152 to 153; these read DI and DV.

It belongs to the class I-like SAM-binding methyltransferase superfamily. As to quaternary structure, homodimer.

Its pathway is secondary metabolite biosynthesis; terpenoid biosynthesis. Functionally, methyltransferase; part of the gene cluster that mediates the biosynthesis of terretonin, a fungal meroterpenoid that acts as a mycotoxin. The first step of the pathway is the synthesis of 3,5-dimethylorsellinic acid (DMOA) by the polyketide synthase trt4. DMOA is then prenylated into farnesyl-DMOA by the polyprenyl transferase trt2. Methylation by the methyltransferase trt5 then leads to farnesyl-DMOA methyl ester which is further subject to epoxidation by the FAD-dependent monooxygenase trt8 to yield epoxyfarnesyl-DMOA methyl ester. Cyclization of epoxyfarnesyl-DMOA methyl ester by the terpene cyclase trt1 leads to a tetracycle intermediate which is in turn converted to preterretonin. Dehydrogenase trt9 comes next to transform preterretonin to preterrenoid. The FAD-dependent monooxygenase trt3 is then required for the C-hydroxylation at C16 of preterrenoid to yield terrenoid. The cytochrome P450 trt6 catalyzes three successive oxidations to transform terrenoid into an unstable intermediate, which then undergoes the D-ring expansion and unusual rearrangement of the methoxy group to afford the core skeleton of terretonin. Trt14 catalyzes the D-ring expansion of terretonin involving intramolecular methoxy rearrangement as well as the hydrolysis of the expanded D-ring and the methyl ester moiety. Finally, the nonheme iron-dependent dioxygenase trt7 accomplishes the last two oxidation reactions steps to complete the biosynthesis of terretonin. Terretonin C is produced via spontaneous decarboxylation of the terretonin precursor. Another shunt product of the terretonin biosynthesis is dihydrofarnesyl-DMOA, derived from epoxyfarnesyl-DMOA through hydrolysis of the epoxide. This chain is Methyltransferase trt5, found in Aspergillus terreus (strain NIH 2624 / FGSC A1156).